The sequence spans 1002 residues: MAKKSKKNQQNYWDEEFEEDAAQNEEISATPTPNPESSAGADDTSREASASAEGAEAIEGDFMSTLKQSKKKQEKKVIEEKKDGKPILKSKKEKEKEKKEKEKQKKKEQAARKKAQQQAQKEKNKELNKQNVEKAAAEKAAAEKSQKSKGESDKPSASAKKPAKKVPAGLAALRRQLELKKQLEEQEKLEREEEERLEKEEEERLANEEKMKEEAKAAKKEKEKAKREKRKAEGKLLTRKQKEEKKLLERRRAALLSSGNVKVAGLAKKDGEENKPKKVVYSKKKKRTTQENASEAIKSDSKKDSEVVPDDELKESEDVLIDDWENLALGDDDEEGTNEETQESTASHENEDQNQGEEEEEGEEEEEEEEERAHVHEVAKSTPAATPAATPTPSSASPNKKDLRSPICCILGHVDTGKTKLLDKIRQTNVQGGEAGGITQQIGATYFPIDAIKAKTKVMAEYEKQTFDVPGLLVIDTPGHESFSNLRSRGSSLCNIAILVIDIMHGLEQQTIESIKLLRDRKAPFVVALNKIDRLYDWKAIPNNSFRDSFAKQSRAVQEEFQSRYSKIQLELAEQGLNSELYFQNKNMSKYVSIVPTSAVTGEGVPDLLWLLLELTQKRMSKQLMYLSHVEATILEVKVVEGFGTTIDVILSNGYLREGDRIVLCGMNGPIVTNIRALLTPQPLRELRLKSEYVHHKEVKAALGVKIAANDLEKAVSGSRLLVVGPEDDEDELMDDVMDDLTGLLDSVDTTGKGVVVQASTLGSLEALLDFLKDMKIPVMSIGLGPVYKRDVMKASTMLEKAPEYAVMLCFDVKVDKEAEQYAEQEGIKIFNADVIYHLFDSFTAYQEKLLEERRKDFLDYAIFPCVLQTLQIINKRGPMIIGVDVLEGTLRVGTPICAVKTDPTTKERQTLILGKVISLEINHQPVQEVKKGQTAAGVAVRLEDPSGQQPIWGRHVDENDTLYSLVSRRSIDTLKDKAFRDQVARSDWLLLKKLKVVFGIE.

Disordered regions lie at residues 1–172 and 184–402; these read MAKK…GLAA and EEQE…NKKD. Positions 13–23 are enriched in acidic residues; that stretch reads WDEEFEEDAAQ. The segment covering 27–37 has biased composition (polar residues); that stretch reads ISATPTPNPES. Residues 47 to 57 are compositionally biased toward low complexity; it reads EASASAEGAEA. Basic and acidic residues-rich tracts occupy residues 75–111 and 120–154; these read KKVI…EQAA and QKEK…ESDK. Low complexity predominate over residues 155 to 172; it reads PSASAKKPAKKVPAGLAA. Composition is skewed to basic and acidic residues over residues 184 to 252 and 267 to 276; these read EEQE…ERRR and AKKDGEENKP. Residues 277 to 287 are compositionally biased toward basic residues; sequence KKVVYSKKKKR. A compositionally biased stretch (basic and acidic residues) spans 297-306; the sequence is IKSDSKKDSE. Composition is skewed to acidic residues over residues 307–342 and 352–370; these read VVPD…EETQ and DQNQ…EEEE. Residues 381-398 are compositionally biased toward low complexity; the sequence is STPAATPAATPTPSSASP. Residues 403–621 enclose the tr-type G domain; sequence LRSPICCILG…LLELTQKRMS (219 aa). Serine 405 carries the post-translational modification Phosphoserine. A G1 region spans residues 412 to 419; that stretch reads GHVDTGKT. Aspartate 415 serves as a coordination point for K(+). Aspartate 415 lines the Na(+) pocket. GTP-binding positions include 415 to 420, glutamine 431, and 437 to 439; these read DTGKTK and GIT. Threonine 419 contributes to the Mg(2+) binding site. Glycine 437 lines the K(+) pocket. Position 437 (glycine 437) interacts with Na(+). The segment at 437–441 is G2; it reads GITQQ. Threonine 439 provides a ligand contact to Mg(2+). Residues 476 to 479 form a G3 region; it reads DTPG. Residues 530-533 and 599-600 contribute to the GTP site; these read NKID and AV. The interval 530–533 is G4; that stretch reads NKID. A G5 region spans residues 598-600; it reads SAV.

This sequence belongs to the TRAFAC class translation factor GTPase superfamily. Classic translation factor GTPase family. IF-2 subfamily. Requires Na(+) as cofactor. K(+) is required as a cofactor.

It is found in the cytoplasm. It catalyses the reaction GTP + H2O = GDP + phosphate + H(+). Functionally, plays a role in translation initiation. Translational GTPase that catalyzes the joining of the 40S and 60S subunits to form the 80S initiation complex with the initiator methionine-tRNA in the P-site base paired to the start codon. GTP binding and hydrolysis induces conformational changes in the enzyme that renders it active for productive interactions with the ribosome. The release of the enzyme after formation of the initiation complex is a prerequisite to form elongation-competent ribosomes. Stimulates 20S pre-rRNA cleavage to mature 18S rRNA by PIN-domain endonuclease NOB1. The polypeptide is Eukaryotic translation initiation factor 5B (Saccharomyces cerevisiae (strain ATCC 204508 / S288c) (Baker's yeast)).